The following is a 556-amino-acid chain: Protein misato homolog 1 (556 aa).

The residue at position 41 (Ser-41) is a Phosphoserine.

This sequence belongs to the misato family.

The protein localises to the mitochondrion outer membrane. The protein resides in the cytoplasm. Involved in the regulation of mitochondrial distribution and morphology. Required for mitochondrial fusion and mitochondrial network formation. The polypeptide is Protein misato homolog 1 (Msto1) (Mus musculus (Mouse)).